A 266-amino-acid chain; its full sequence is Non-structural maintenance of chromosomes element 1 homolog (266 aa).

The segment at 1–102 is interaction with NSMCE3; it reads MQGSTRRMGV…SISKMATDFA (102 aa). The RING-type; atypical zinc-finger motif lies at 191–232; sequence CNICHSLLIQGQSCETCGIRMHLPCVAKYFQSNAEPRCPHCN. The interval 246 to 266 is disordered; it reads EKERESGVLKSNKKSLRSRQH. Position 251 is a phosphoserine (S251). Residues 256–266 show a composition bias toward basic residues; that stretch reads SNKKSLRSRQH.

This sequence belongs to the NSE1 family. In terms of assembly, component of the SMC5-SMC6 complex which consists at least of SMC5, SMC6, NSMCE2, NSMCE1, NSMCE4A or EID3 and NSMCE3. NSMCE1, NSMCE4A or EID3 and NSMCE3 probably form a subcomplex that bridges the head domains of the SMC5-SMC6 heterodimer. Interacts with NSMCE3. Interacts with MAGEF1. In terms of processing, ubiquitinated.

It is found in the nucleus. The protein localises to the chromosome. Its subcellular location is the telomere. The catalysed reaction is S-ubiquitinyl-[E2 ubiquitin-conjugating enzyme]-L-cysteine + [acceptor protein]-L-lysine = [E2 ubiquitin-conjugating enzyme]-L-cysteine + N(6)-ubiquitinyl-[acceptor protein]-L-lysine.. Its function is as follows. RING-type zinc finger-containing E3 ubiquitin ligase that assembles with melanoma antigen protein (MAGE) to catalyze the direct transfer of ubiquitin from E2 ubiquitin-conjugating enzyme to a specific substrate. Within MAGE-RING ubiquitin ligase complex, MAGE stimulates and specifies ubiquitin ligase activity likely through recruitment and/or stabilization of the E2 ubiquitin-conjugating enzyme at the E3:substrate complex. Involved in maintenance of genome integrity, DNA damage response and DNA repair. NSMCE3/MAGEG1 and NSMCE1 ubiquitin ligase are components of SMC5-SMC6 complex and may positively regulate homologous recombination-mediated DNA repair. MAGEF1-NSMCE1 ubiquitin ligase promotes proteasomal degradation of MMS19, a key component of the cytosolic iron-sulfur protein assembly (CIA) machinery. Down-regulation of MMS19 impairs the activity of several DNA repair and metabolism enzymes such as ERCC2/XPD, FANCJ, RTEL1 and POLD1 that require iron-sulfur clusters as cofactors. The sequence is that of Non-structural maintenance of chromosomes element 1 homolog from Homo sapiens (Human).